Reading from the N-terminus, the 796-residue chain is Vacuolar protein sorting-associated protein 35 (796 aa).

Position 7 is a phosphoserine (S7). 2 interaction with SNX3 regions span residues 25-44 (VQSFQMKRCLDKNKLMDALK) and 205-215 (DREKRERERQE). Residues 438-796 (CYVLSNVLDY…EGPIYEGLIL (359 aa)) form an interaction with SLC11A2 region. Residues 500 to 693 (SEDPDQQYLI…DKNGEELHGG (194 aa)) are interaction with IGF2R cytoplasmic domain. S783 carries the phosphoserine modification. Y791 bears the Phosphotyrosine mark.

This sequence belongs to the VPS35 family. As to quaternary structure, component of the heterotrimeric retromer cargo-selective complex (CSC), also decribed as vacuolar protein sorting subcomplex (VPS), formed by VPS26 (VPS26A or VPS26B), VPS29 and VPS35. The CSC has a highly elongated structure with VPS26 and VPS29 binding independently at opposite distal ends of VPS35 as central platform. The CSC is believed to associate with variable sorting nexins to form functionally distinct retromer complex variants. The originally described retromer complex (also called SNX-BAR retromer) is a pentamer containing the CSC and a heterodimeric membrane-deforming subcomplex formed between SNX1 or SNX2 and SNX5 or SNX6 (also called SNX-BAR subcomplex); the respective CSC and SNX-BAR subcomplexes associate with low affinity. The CSC associates with SNX3 to form a SNX3-retromer complex. The CSC associates with SNX27, the WASH complex and the SNX-BAR subcomplex to form the SNX27-retromer complex. Interacts with VPS26A, VPS26B, VPS29, SNX1, SNX2, IGF2R, SNX3, GOLPH3, LRRK2, SLC11A2, WASHC2A, WASHC2C, FKBP15, WASHC1, RAB7A, SNX27, WASHC5, EHD1. Interacts with MAGEL2; leading to recruitment of the TRIM27:MAGEL2 E3 ubiquitin ligase complex retromer-containing endosomes. Interacts with SORCS2. In terms of assembly, (Microbial infection) Interacts with human papillomavirus 16 minor capsid protein L2 (via C-terminus); this interaction mediates the transport of the capsid from the early endosome to the Golgi apparatus. As to expression, ubiquitous. Highly expressed in heart, brain, placenta, skeletal muscle, spleen, thymus, testis, ovary, small intestine, kidney and colon.

Its subcellular location is the cytoplasm. The protein resides in the membrane. It localises to the endosome. It is found in the early endosome. The protein localises to the late endosome. Functionally, acts as a component of the retromer cargo-selective complex (CSC). The CSC is believed to be the core functional component of retromer or respective retromer complex variants acting to prevent missorting of selected transmembrane cargo proteins into the lysosomal degradation pathway. The recruitment of the CSC to the endosomal membrane involves RAB7A and SNX3. The CSC seems to associate with the cytoplasmic domain of cargo proteins predominantly via VPS35; however, these interactions seem to be of low affinity and retromer SNX proteins may also contribute to cargo selectivity thus questioning the classical function of the CSC. The SNX-BAR retromer mediates retrograde transport of cargo proteins from endosomes to the trans-Golgi network (TGN) and is involved in endosome-to-plasma membrane transport for cargo protein recycling. The SNX3-retromer mediates the retrograde endosome-to-TGN transport of WLS distinct from the SNX-BAR retromer pathway. The SNX27-retromer is believed to be involved in endosome-to-plasma membrane trafficking and recycling of a broad spectrum of cargo proteins. The CSC seems to act as recruitment hub for other proteins, such as the WASH complex and TBC1D5. Required for retrograde transport of lysosomal enzyme receptor IGF2R and SLC11A2. Required to regulate transcytosis of the polymeric immunoglobulin receptor (pIgR-pIgA). Required for endosomal localization of WASHC2C. Mediates the association of the CSC with the WASH complex via WASHC2. Required for the endosomal localization of TBC1D5. In terms of biological role, (Microbial infection) The heterotrimeric retromer cargo-selective complex (CSC) mediates the exit of human papillomavirus from the early endosome and the delivery to the Golgi apparatus. This chain is Vacuolar protein sorting-associated protein 35, found in Homo sapiens (Human).